A 255-amino-acid chain; its full sequence is Fumarate reductase cytochrome b subunit (255 aa).

5 consecutive transmembrane segments (helical) span residues 33 to 53 (TGLI…SILI), 78 to 98 (IVSV…FLAL), 126 to 146 (WFIQ…HLFV), 168 to 188 (FWLL…IGLY), and 208 to 228 (IKWA…GAYI). Heme b contacts are provided by histidine 44, histidine 93, histidine 143, and histidine 182.

This sequence belongs to the diheme cytochrome b FrdC family. Part of an enzyme complex containing three subunits: a flavoprotein (frdA), an iron-sulfur protein (frdB), and diheme cytochrome b (frdC). It depends on heme b as a cofactor.

Its subcellular location is the cell inner membrane. In terms of biological role, the fumarate reductase enzyme complex is required for fumarate respiration. This subunit anchors the complex in the membrane and binds a diheme cytochrome b. In Helicobacter pylori (strain J99 / ATCC 700824) (Campylobacter pylori J99), this protein is Fumarate reductase cytochrome b subunit (frdC).